We begin with the raw amino-acid sequence, 216 residues long: GTP cyclohydrolase 1 (216 aa).

The interval Met-1–Glu-33 is disordered. Residues Pro-24 to Glu-33 show a composition bias toward low complexity. Residues Cys-102, His-105, and Cys-173 each contribute to the Zn(2+) site.

Belongs to the GTP cyclohydrolase I family. As to quaternary structure, toroid-shaped homodecamer, composed of two pentamers of five dimers.

It carries out the reaction GTP + H2O = 7,8-dihydroneopterin 3'-triphosphate + formate + H(+). It functions in the pathway cofactor biosynthesis; 7,8-dihydroneopterin triphosphate biosynthesis; 7,8-dihydroneopterin triphosphate from GTP: step 1/1. The polypeptide is GTP cyclohydrolase 1 (folE) (Deinococcus radiodurans (strain ATCC 13939 / DSM 20539 / JCM 16871 / CCUG 27074 / LMG 4051 / NBRC 15346 / NCIMB 9279 / VKM B-1422 / R1)).